The chain runs to 261 residues: Polyamine aminopropyltransferase (261 aa).

The PABS domain occupies 1 to 219; sequence MHPFRRRVRP…AVMAFRQSPS (219 aa). S-methyl-5'-thioadenosine-binding positions include Asp-96 and 124–125; that span reads DG. Residue Asp-142 is the Proton acceptor of the active site.

It belongs to the spermidine/spermine synthase family. In terms of assembly, homodimer or homotetramer.

The protein localises to the cytoplasm. The enzyme catalyses S-adenosyl 3-(methylsulfanyl)propylamine + putrescine = S-methyl-5'-thioadenosine + spermidine + H(+). Its pathway is amine and polyamine biosynthesis; spermidine biosynthesis; spermidine from putrescine: step 1/1. Functionally, catalyzes the irreversible transfer of a propylamine group from the amino donor S-adenosylmethioninamine (decarboxy-AdoMet) to putrescine (1,4-diaminobutane) to yield spermidine. This Chromobacterium violaceum (strain ATCC 12472 / DSM 30191 / JCM 1249 / CCUG 213 / NBRC 12614 / NCIMB 9131 / NCTC 9757 / MK) protein is Polyamine aminopropyltransferase.